The chain runs to 1336 residues: Coiled-coil and C2 domain-containing protein 2A (1336 aa).

2 disordered regions span residues 1–29 and 70–97; these read MEAA…EQEV and VEDC…QTFI. Over residues 8–23 the composition is skewed to basic residues; sequence KTAKKKRKTHTTRGYR. Over residues 70-89 the composition is skewed to acidic residues; sequence VEDCQESDEDSGGELAEEPT. The stretch at 136 to 156 forms a coiled coil; the sequence is LSDLSELKDSQIRMLNRYQEQ. One can recognise a C2 domain in the interval 755-915; the sequence is PREPSGWSGH…LASRTFEGCI (161 aa).

Probable component of the tectonic-like complex (also named MKS complex), composed of B9d1, B9d2, Cc2d2a, Mks1 and tctn. In terms of tissue distribution, expressed in the antennae of chordotonal neurons and male germ cells (at protein level).

It localises to the cytoplasm. The protein resides in the cytoskeleton. Its subcellular location is the cilium basal body. It is found in the microtubule organizing center. The protein localises to the centrosome. It localises to the centriole. Its function is as follows. Probable component of the tectonic-like complex (also named MKS complex), a complex localized at the transition zone of primary cilia. Required for ciliary structure and function. The sequence is that of Coiled-coil and C2 domain-containing protein 2A from Drosophila melanogaster (Fruit fly).